We begin with the raw amino-acid sequence, 131 residues long: D-ribose pyranase (131 aa).

The active-site Proton donor is the His20. Substrate-binding positions include Asp28, His98, and 120-122; that span reads YAN.

The protein belongs to the RbsD / FucU family. RbsD subfamily. Homodecamer.

The protein resides in the cytoplasm. It carries out the reaction beta-D-ribopyranose = beta-D-ribofuranose. Its pathway is carbohydrate metabolism; D-ribose degradation; D-ribose 5-phosphate from beta-D-ribopyranose: step 1/2. In terms of biological role, catalyzes the interconversion of beta-pyran and beta-furan forms of D-ribose. This chain is D-ribose pyranase, found in Bacillus cereus (strain ATCC 14579 / DSM 31 / CCUG 7414 / JCM 2152 / NBRC 15305 / NCIMB 9373 / NCTC 2599 / NRRL B-3711).